A 148-amino-acid chain; its full sequence is Large ribosomal subunit protein uL13 (148 aa).

The protein belongs to the universal ribosomal protein uL13 family. In terms of assembly, part of the 50S ribosomal subunit.

This protein is one of the early assembly proteins of the 50S ribosomal subunit, although it is not seen to bind rRNA by itself. It is important during the early stages of 50S assembly. The protein is Large ribosomal subunit protein uL13 of Oenococcus oeni (strain ATCC BAA-331 / PSU-1).